The chain runs to 383 residues: DNA dC-&gt;dU-editing enzyme APOBEC-3G (383 aa).

Residues 1 to 60 (MKPHFRNTVERMYRGTFFYNFNNRPILSRRNTVWLCYEVKTRGPSMPTWGAKIFRGQLYP) are essential for cytoplasmic localization. 2 CMP/dCMP-type deaminase domains span residues 29–138 (RRNT…LRIL) and 214–327 (GQRE…LRTL). Threonine 32 carries the phosphothreonine; by PKA modification. Zn(2+)-binding residues include histidine 65, cysteine 97, and cysteine 100. Residues 209-335 (KPWVSGQRET…TLHRDGAKIA (127 aa)) form a necessary for homooligomerization region. The segment at 213 to 215 (SGQ) is interaction with DNA. Position 218 is a phosphothreonine; by PKA and CAMK2 (threonine 218). Histidine 257 contributes to the Zn(2+) binding site. Glutamate 259 serves as the catalytic Proton donor. Residues cysteine 287 and cysteine 290 each contribute to the Zn(2+) site. The interval 312–319 (RIYDDQGR) is interaction with DNA.

The protein belongs to the cytidine and deoxycytidylate deaminase family. In terms of assembly, homodimer. Homooligomer. Can bind RNA to form ribonucleoprotein complexes of high-molecular-mass (HMM) or low-molecular-mass (LMM). HMM is inactive and heterogeneous in protein composition because of binding nonselectively to cellular RNAs, which in turn are associated with variety of cellular proteins. The LMM form which is enzymatically active has few or no RNAs associated. Its ability to form homooligomer is distinct from its ability to assemble into HMM. Interacts with APOBEC3B, APOBEC3F, MOV10, AGO2, EIF4E, EIF4ENIF1, DCP2 and DDX6 in an RNA-dependent manner. Interacts with AGO1, AGO3 and PKA/PRKACA. It depends on Zn(2+) as a cofactor.

Its subcellular location is the cytoplasm. The protein localises to the nucleus. It localises to the P-body. The catalysed reaction is a 2'-deoxycytidine in single-stranded DNA + H2O + H(+) = a 2'-deoxyuridine in single-stranded DNA + NH4(+). In terms of biological role, DNA deaminase (cytidine deaminase) which acts as an inhibitor of retrovirus replication and retrotransposon mobility. After the penetration of retroviral nucleocapsids into target cells of infection and the initiation of reverse transcription, it can induce the conversion of cytosine to uracil in the minus-sense single-strand viral DNA, leading to G-to-A hypermutations in the subsequent plus-strand viral DNA. The resultant detrimental levels of mutations in the proviral genome, along with a deamination-independent mechanism that works prior to the proviral integration, together exert efficient antiretroviral effects in infected target cells. Selectively targets single-stranded DNA and does not deaminate double-stranded DNA or single- or double-stranded RNA. This chain is DNA dC-&gt;dU-editing enzyme APOBEC-3G (APOBEC3G), found in Erythrocebus patas (Red guenon).